The following is a 517-amino-acid chain: 2-isopropylmalate synthase (517 aa).

Residues 7-269 form the Pyruvate carboxyltransferase domain; that stretch reads VIIFDTTLRD…ETGIDTTQIV (263 aa). Residues D16, H204, H206, and N240 each contribute to the Mn(2+) site. The interval 366–517 is required for the condensation reaction. Not required to bind substrate; it reads LADKKREIFD…KPKAQGSGTI (152 aa). The regulatory domain stretch occupies residues 395-517; sequence KFISQKISTE…KPKAQGSGTI (123 aa).

Belongs to the alpha-IPM synthase/homocitrate synthase family. LeuA type 1 subfamily. As to quaternary structure, homodimer. Remains a homodimer in the presence of L-leucine. Requires Mn(2+) as cofactor.

The protein localises to the cytoplasm. The enzyme catalyses 3-methyl-2-oxobutanoate + acetyl-CoA + H2O = (2S)-2-isopropylmalate + CoA + H(+). It functions in the pathway amino-acid biosynthesis; L-leucine biosynthesis; L-leucine from 3-methyl-2-oxobutanoate: step 1/4. With respect to regulation, inhibited by 3-bromo substituents and Leu, the pathway end product. In terms of biological role, catalyzes the condensation of the acetyl group of acetyl-CoA with 3-methyl-2-oxobutanoate (2-ketoisovalerate) to form 3-carboxy-3-hydroxy-4-methylpentanoate (2-isopropylmalate). Complements an E.coli deletion. The chain is 2-isopropylmalate synthase from Neisseria meningitidis serogroup B (strain ATCC BAA-335 / MC58).